A 948-amino-acid chain; its full sequence is Probable disease resistance protein At5g47260 (948 aa).

Residues 20 to 57 (RKYLYNLERNLEALHKVMQDLNAMRNDLLKRLSKEEEI) adopt a coiled-coil conformation. The 299-residue stretch at 134-432 (HRALPPLVIK…CEGILAKEDR (299 aa)) folds into the NB-ARC domain. 176–183 (GRGGVGKT) is an ATP binding site. 9 LRR repeats span residues 498 to 519 (MIRR…PQCS), 520 to 542 (ELTT…FFQW), 545 to 567 (GLVV…VSSL), 569 to 591 (LLRF…KELK), 592 to 614 (SLIH…ASLL), 615 to 636 (NLQV…EDIQ), 640 to 661 (SLKE…LSIQ), 666 to 686 (SIRR…LSLN), and 690 to 711 (SLCE…WRCT).

The protein belongs to the disease resistance NB-LRR family.

In terms of biological role, potential disease resistance protein. This chain is Probable disease resistance protein At5g47260, found in Arabidopsis thaliana (Mouse-ear cress).